We begin with the raw amino-acid sequence, 682 residues long: Potassium-transporting ATPase ATP-binding subunit (682 aa).

The next 4 membrane-spanning stretches (helical) occupy residues 35-55 (VMFV…AMAA), 62-82 (TGFT…ANFA), 219-239 (IALT…TVTL), and 254-274 (VLVA…LSAI). The active-site 4-aspartylphosphate intermediate is aspartate 307. ATP-binding positions include aspartate 344, glutamate 348, 377 to 384 (FSAQTRMS), and lysine 395. Aspartate 518 and aspartate 522 together coordinate Mg(2+). The next 3 helical transmembrane spans lie at 577–597 (TFSI…AFAA), 616–636 (AILS…PLAL), and 656–676 (IYGV…DMLL).

Belongs to the cation transport ATPase (P-type) (TC 3.A.3) family. Type IA subfamily. As to quaternary structure, the system is composed of three essential subunits: KdpA, KdpB and KdpC.

The protein localises to the cell inner membrane. It carries out the reaction K(+)(out) + ATP + H2O = K(+)(in) + ADP + phosphate + H(+). Part of the high-affinity ATP-driven potassium transport (or Kdp) system, which catalyzes the hydrolysis of ATP coupled with the electrogenic transport of potassium into the cytoplasm. This subunit is responsible for energy coupling to the transport system and for the release of the potassium ions to the cytoplasm. This chain is Potassium-transporting ATPase ATP-binding subunit, found in Erwinia tasmaniensis (strain DSM 17950 / CFBP 7177 / CIP 109463 / NCPPB 4357 / Et1/99).